A 701-amino-acid polypeptide reads, in one-letter code: Eukaryotic peptide chain release factor GTP-binding subunit (701 aa).

Residues 1–25 (MSDDQQYNQDKLSQDFQNTSIGSGE) are compositionally biased toward polar residues. 3 disordered regions span residues 1 to 63 (MSDD…YQGG), 91 to 124 (NQGY…NQQD), and 164 to 259 (KLAN…VIQE). The tract at residues 20–131 (SIGSGEQQQQ…QQDQQPVQNQ (112 aa)) is several sort of repeats. Low complexity predominate over residues 26 to 40 (QQQQSYQQYQQQPQQ). The segment covering 41 to 54 (NNFNANSAPTFTPS) has biased composition (polar residues). The tract at residues 132 to 271 (GMSLADFQKQ…DEVDEEVVKD (140 aa)) is charged. Basic and acidic residues predominate over residues 170–224 (KAPETESKEATPAATEKEATPAATEKEATPAATEKEATPAATEKETTPAPAKKEA). Over residues 228-252 (SVKSESKPASKSTSKVATKESTPVT) the composition is skewed to polar residues. Residues 276 to 501 (KDHVSIIFMG…FLDNMKTMQR (226 aa)) form the tr-type G domain. A G1 region spans residues 285–292 (GHVDAGKS). 285–292 (GHVDAGKS) contributes to the GTP binding site. The tract at residues 341 to 345 (GKTIE) is G2. At threonine 359 the chain carries Phosphothreonine. Positions 362 to 365 (DAPG) are G3. GTP-binding positions include 362–366 (DAPGH) and 424–427 (NKMD). The tract at residues 424 to 427 (NKMD) is G4. Residues 465-467 (SGY) are G5.

The protein belongs to the TRAFAC class translation factor GTPase superfamily. Classic translation factor GTPase family. ERF3 subfamily.

The protein localises to the cytoplasm. Its function is as follows. Involved in translation termination. Stimulates the activity of ERF1. Binds guanine nucleotides. This Debaryomyces hansenii (strain ATCC 36239 / CBS 767 / BCRC 21394 / JCM 1990 / NBRC 0083 / IGC 2968) (Yeast) protein is Eukaryotic peptide chain release factor GTP-binding subunit (SUP35).